A 116-amino-acid polypeptide reads, in one-letter code: Cysteine proteinase inhibitor 1 (116 aa).

The N-terminal stretch at 1–26 (MVPKPLSLLLFLLLALSAAVVGGRKL) is a signal peptide. Positions 30–89 (GGWRPIESLNSAEVQDVAQFAVSEHNKQANDELQYQSVVRGYTQVVAGTNYRLVIAAKDG) constitute a Cystatin domain. The Secondary area of contact motif lies at 73 to 77 (QVVAG). Asn109 carries N-linked (GlcNAc...) asparagine glycosylation.

Belongs to the cystatin family. Phytocystatin subfamily. Glycosylated.

It is found in the secreted. Functionally, specific inhibitor of papain family cysteine proteinases. Inhibits papain, chymopapain, bromelain, ficin, human cathepsins B, H and L, actinidain and house dustmite endopeptidase 1, but does not inhibit human bleomycin hydrolase. Inhibits papain with an IC(50) of 2.47 nM. Does not inhibit cysteine proteinases belonging to other families including clostripain, streptopain and calpain. The chain is Cysteine proteinase inhibitor 1 from Actinidia deliciosa (Kiwi).